Reading from the N-terminus, the 477-residue chain is Cytochrome P450 708A2 (477 aa).

Residues 3 to 23 form a helical membrane-spanning segment; that stretch reads FVWSAAVWVIAVAAVVISKWL. Cys426 is a heme binding site.

This sequence belongs to the cytochrome P450 family. Heme is required as a cofactor. In terms of tissue distribution, expressed primarily in the root epidermis.

The protein localises to the membrane. Functionally, hydroxylates thalianol into thalian-diol. This is Cytochrome P450 708A2 (CYP708A2) from Arabidopsis thaliana (Mouse-ear cress).